Reading from the N-terminus, the 360-residue chain is MSFLEIKGLHKHYGPVAALAGVDLDVASGSRTAIVGPSGCGKTTLLRLIAGFEAPDQGRIVLDGEVLANGGAAVPAHRRGIGVVAQDGALFPHLTIGDNIGFGMGRGDDKRAERIVELAYIVGLDKAILKRRPHELSGGQQQRVALARAMAMKPRLMLLDEPFSALDTGLRASMRKAVAELLEAAGITTILVTHDQAEALSFAAQVAVMRDGKFSQVGTPRDLYLKPKDRMIAEFLGDAIILPASISGGFANSPLGRIAVDTNDSRDVARILLRPEQIGLKRTSREGMSGTPDMLFGEVTESEFAGSTCTIAVRLLNNFDPPDAAAIGNTPLILRKSGMDAPAVGEIVRLTVSGKAHVFV.

Residues 4–236 (LEIKGLHKHY…PKDRMIAEFL (233 aa)) enclose the ABC transporter domain. 36-43 (GPSGCGKT) is an ATP binding site.

The protein belongs to the ABC transporter superfamily. Fe(3+) ion importer (TC 3.A.1.10) family. As to quaternary structure, the complex is composed of two ATP-binding proteins (FbpC), two transmembrane proteins (FbpB) and a solute-binding protein (FbpA).

It localises to the cell inner membrane. It carries out the reaction Fe(3+)(out) + ATP + H2O = Fe(3+)(in) + ADP + phosphate + H(+). Part of the ABC transporter complex FbpABC involved in Fe(3+) ions import. Responsible for energy coupling to the transport system. This chain is Fe(3+) ions import ATP-binding protein FbpC, found in Mesorhizobium japonicum (strain LMG 29417 / CECT 9101 / MAFF 303099) (Mesorhizobium loti (strain MAFF 303099)).